The chain runs to 391 residues: Putative neutrophil cytosol factor 1B (391 aa).

The PX domain maps to Met-1 to Leu-126. SH3 domains are found at residues Ile-157 to Ser-216 and Tyr-227 to Gln-286. The tract at residues Gln-286–Val-391 is disordered. A phosphoserine mark is found at Ser-304 and Ser-305. The segment covering His-310 to Arg-319 has biased composition (basic residues). Phosphoserine occurs at positions 321, 329, 346, and 349.

Its subcellular location is the cytoplasm. Functionally, may be required for activation of the latent NADPH oxidase (necessary for superoxide production). The polypeptide is Putative neutrophil cytosol factor 1B (NCF1B) (Homo sapiens (Human)).